The following is a 183-amino-acid chain: Ribulose bisphosphate carboxylase small subunit, chloroplastic 3 (183 aa).

Residues 1–57 (MASSLMSNAATTMAAATTTAQANMVAPFNGLKSVSAFPVTRKNNDITSVASNGGRVQ) constitute a chloroplast transit peptide.

The protein belongs to the RuBisCO small chain family. Heterohexadecamer of 8 large and 8 small subunits.

It localises to the plastid. It is found in the chloroplast. In terms of biological role, ruBisCO catalyzes two reactions: the carboxylation of D-ribulose 1,5-bisphosphate, the primary event in carbon dioxide fixation, as well as the oxidative fragmentation of the pentose substrate. Both reactions occur simultaneously and in competition at the same active site. Although the small subunit is not catalytic it is essential for maximal activity. The sequence is that of Ribulose bisphosphate carboxylase small subunit, chloroplastic 3 from Mesembryanthemum crystallinum (Common ice plant).